The following is a 145-amino-acid chain: Basic phospholipase A2 KPA2 (145 aa).

The signal sequence occupies residues 1-19 (MYPAHLLVLVAVCVSLLGA). Residues 20–27 (ANIPPQPL) constitute a propeptide that is removed on maturation. 7 disulfide bridges follow: cysteine 38-cysteine 97, cysteine 52-cysteine 144, cysteine 54-cysteine 70, cysteine 69-cysteine 125, cysteine 76-cysteine 118, cysteine 86-cysteine 111, and cysteine 104-cysteine 116. The Ca(2+) site is built by tyrosine 53, glycine 55, and glycine 57. Histidine 73 is an active-site residue. Aspartate 74 is a binding site for Ca(2+). Aspartate 119 is an active-site residue.

It belongs to the phospholipase A2 family. Group I subfamily. D49 sub-subfamily. In terms of assembly, monomer. Requires Ca(2+) as cofactor. Expressed by the venom gland.

It localises to the secreted. The enzyme catalyses a 1,2-diacyl-sn-glycero-3-phosphocholine + H2O = a 1-acyl-sn-glycero-3-phosphocholine + a fatty acid + H(+). In terms of biological role, snake venom phospholipase A2 (PLA2) that shows anticoagulant and neurotoxic activities. PLA2 catalyzes the calcium-dependent hydrolysis of the 2-acyl groups in 3-sn-phosphoglycerides. The chain is Basic phospholipase A2 KPA2 from Bungarus caeruleus (Indian krait).